The sequence spans 172 residues: Molybdopterin synthase catalytic subunit (172 aa).

Residue S20 is modified to Phosphoserine. Residues H127–R128, K143, and K150–E152 contribute to the substrate site.

It belongs to the MoaE family. MOCS2B subfamily. In terms of assembly, heterotetramer; composed of 2 small (MOCS2A) and 2 large (MOCS2B) subunits.

Its subcellular location is the cytoplasm. The protein localises to the cytosol. It catalyses the reaction 2 [molybdopterin-synthase sulfur-carrier protein]-C-terminal-Gly-aminoethanethioate + cyclic pyranopterin phosphate + H2O = molybdopterin + 2 [molybdopterin-synthase sulfur-carrier protein]-C-terminal Gly-Gly + 2 H(+). It participates in cofactor biosynthesis; molybdopterin biosynthesis. Functionally, catalytic subunit of the molybdopterin synthase complex, a complex that catalyzes the conversion of precursor Z into molybdopterin. Acts by mediating the incorporation of 2 sulfur atoms from thiocarboxylated MOCS2A into precursor Z to generate a dithiolene group. The polypeptide is Molybdopterin synthase catalytic subunit (Pongo abelii (Sumatran orangutan)).